A 328-amino-acid chain; its full sequence is Biotin synthase (328 aa).

Positions 48–277 (FVGNEVHLCS…GKRITVCGGR (230 aa)) constitute a Radical SAM core domain. The [4Fe-4S] cluster site is built by Cys66, Cys70, and Cys73. Ser142 and Cys202 together coordinate [2Fe-2S] cluster.

Belongs to the radical SAM superfamily. Biotin synthase family. In terms of assembly, homodimer. [4Fe-4S] cluster is required as a cofactor. It depends on [2Fe-2S] cluster as a cofactor.

It carries out the reaction (4R,5S)-dethiobiotin + (sulfur carrier)-SH + 2 reduced [2Fe-2S]-[ferredoxin] + 2 S-adenosyl-L-methionine = (sulfur carrier)-H + biotin + 2 5'-deoxyadenosine + 2 L-methionine + 2 oxidized [2Fe-2S]-[ferredoxin]. The protein operates within cofactor biosynthesis; biotin biosynthesis; biotin from 7,8-diaminononanoate: step 2/2. In terms of biological role, catalyzes the conversion of dethiobiotin (DTB) to biotin by the insertion of a sulfur atom into dethiobiotin via a radical-based mechanism. This is Biotin synthase from Citrifermentans bemidjiense (strain ATCC BAA-1014 / DSM 16622 / JCM 12645 / Bem) (Geobacter bemidjiensis).